The sequence spans 901 residues: Protein translocase subunit SecA (901 aa).

ATP is bound by residues glutamine 85, glycine 103–threonine 107, and aspartate 510. Residues glutamate 836–methionine 845 are compositionally biased toward basic and acidic residues. Positions glutamate 836–glutamine 901 are disordered. Polar residues predominate over residues isoleucine 849 to serine 866. Zn(2+) contacts are provided by cysteine 882, cysteine 884, cysteine 893, and histidine 894. Over residues lysine 888–glutamine 901 the composition is skewed to basic residues.

The protein belongs to the SecA family. Monomer and homodimer. Part of the essential Sec protein translocation apparatus which comprises SecA, SecYEG and auxiliary proteins SecDF-YajC and YidC. It depends on Zn(2+) as a cofactor.

It localises to the cell inner membrane. Its subcellular location is the cytoplasm. It carries out the reaction ATP + H2O + cellular proteinSide 1 = ADP + phosphate + cellular proteinSide 2.. In terms of biological role, part of the Sec protein translocase complex. Interacts with the SecYEG preprotein conducting channel. Has a central role in coupling the hydrolysis of ATP to the transfer of proteins into and across the cell membrane, serving both as a receptor for the preprotein-SecB complex and as an ATP-driven molecular motor driving the stepwise translocation of polypeptide chains across the membrane. The chain is Protein translocase subunit SecA from Haemophilus influenzae (strain PittEE).